A 354-amino-acid polypeptide reads, in one-letter code: Glutamine synthetase (354 aa).

The GS beta-grasp domain maps to 22–101; sequence IQAEYVWIDG…VLAETYNNDG (80 aa). The region spanning 108 to 354 is the GS catalytic domain; it reads HRHHAKKVFD…IIAETTILDK (247 aa).

Belongs to the glutamine synthetase family. Homooctamer.

It is found in the cytoplasm. It carries out the reaction L-glutamate + NH4(+) + ATP = L-glutamine + ADP + phosphate + H(+). The chain is Glutamine synthetase (glnA) from Agaricus bisporus (White button mushroom).